We begin with the raw amino-acid sequence, 361 residues long: MRRAARARIDLNALRHNLRTARRAAPRSRVMAVIKAEAYGHGMLAVARALAAQADAFAISCIDEARVLREAGVTLPLVVLQGFRDAAQLIEVARLGDVQPVIHSTGQLDVLESAALPAPLRVWLKLDTGMHRLGLPPGEAAVLQNRIAALPQVAGVPGLMTHLACADEPERPETGIQLQVFDAATADLPGERSIANSAAVLRTPAACRDWVRPGIMLYGASPLAGETAQSLDLQPVMTVSAPVVAVKRLAAGDAVGYGGGYVCQSPRTMAVVAMGYGDGYPRHAPSGTPVRVHGRRCALMGRVSMDMLCVDVTEVPGVAPGDDVTLWGEGLPVDEIAAAAGTISYELLCSVGGRLRLEYVG.

Residue Lys35 is the Proton acceptor; specific for D-alanine of the active site. The residue at position 35 (Lys35) is an N6-(pyridoxal phosphate)lysine. Arg132 serves as a coordination point for substrate. Residue Tyr257 is the Proton acceptor; specific for L-alanine of the active site. Met305 is a binding site for substrate.

The protein belongs to the alanine racemase family. The cofactor is pyridoxal 5'-phosphate.

The catalysed reaction is L-alanine = D-alanine. It participates in amino-acid biosynthesis; D-alanine biosynthesis; D-alanine from L-alanine: step 1/1. Its function is as follows. Catalyzes the interconversion of L-alanine and D-alanine. May also act on other amino acids. This chain is Alanine racemase (alr), found in Thioalkalivibrio sulfidiphilus (strain HL-EbGR7).